A 116-amino-acid chain; its full sequence is Large ribosomal subunit protein bL19c (116 aa).

The protein belongs to the bacterial ribosomal protein bL19 family.

Its subcellular location is the plastid. It is found in the chloroplast. This is Large ribosomal subunit protein bL19c from Cyanidium caldarium (Red alga).